A 458-amino-acid polypeptide reads, in one-letter code: uncharacterized protein (458 aa).

The next 12 membrane-spanning stretches (helical) occupy residues 26-46 (LIAI…KSIH), 47-67 (FAGP…FLIM), 95-115 (AAFI…MADL), 125-145 (WLPG…LLIM), 160-180 (FALI…VMIF), 208-228 (GFIL…LVGL), 251-271 (VLLF…WDII), 278-298 (FVQV…NFVV), 342-362 (ALFF…IMPE), 365-385 (FTLI…ITVI), 409-429 (PFTN…LALA), and 432-452 (TRVS…IYKV).

The protein belongs to the amino acid-polyamine-organocation (APC) superfamily.

The protein localises to the cell membrane. Its function is as follows. Probable amino-acid or metabolite transport protein. This is an uncharacterized protein from Bacillus subtilis (strain 168).